The chain runs to 388 residues: MNIHEYQGKEIFRSMGVAVPEGRVAFTAEEAVEKAKELNSDVYVVKAQIHAGGRGKAGGVKIAKSLSEVETYANELLGKQLVTHQTGPEGKEVKRLYIEEGCDIQKEYYVGFVIDRATDKVTLMASEEGGTEIEEVAAQTPEKIFKETIDPVVGLSPYQARRIAFNINIPKESVGKATKFLLALYNVFIEKDCSIVEINPLVTTGDGQVLALDAKLNFDDNALFRHKDILELRDLEEEDPKEIEASKYDLSYIALDGDIGCMVNGAGLAMATMDTINHFGGNPANFLDVGGGATKEKVTEAFKIILGDDNVKGIFVNIFGGIMKCDVIAEGIVAAVKEVELTLPLVVRLEGTNVERGKAILNESGLAIEPAATMAEGAQKIVKLVKEA.

In terms of domain architecture, ATP-grasp spans 9 to 244 (KEIFRSMGVA…LEEEDPKEIE (236 aa)). ATP is bound by residues Lys46, 53–55 (GRG), Glu99, Cys102, and Glu107. Mg(2+) is bound by residues Asn199 and Asp213. Substrate contacts are provided by residues Asn264 and 321 to 323 (GIM).

The protein belongs to the succinate/malate CoA ligase beta subunit family. Heterotetramer of two alpha and two beta subunits. The cofactor is Mg(2+).

The catalysed reaction is succinate + ATP + CoA = succinyl-CoA + ADP + phosphate. It catalyses the reaction GTP + succinate + CoA = succinyl-CoA + GDP + phosphate. It participates in carbohydrate metabolism; tricarboxylic acid cycle; succinate from succinyl-CoA (ligase route): step 1/1. Functionally, succinyl-CoA synthetase functions in the citric acid cycle (TCA), coupling the hydrolysis of succinyl-CoA to the synthesis of either ATP or GTP and thus represents the only step of substrate-level phosphorylation in the TCA. The beta subunit provides nucleotide specificity of the enzyme and binds the substrate succinate, while the binding sites for coenzyme A and phosphate are found in the alpha subunit. The polypeptide is Succinate--CoA ligase [ADP-forming] subunit beta (Staphylococcus epidermidis (strain ATCC 35984 / DSM 28319 / BCRC 17069 / CCUG 31568 / BM 3577 / RP62A)).